Here is a 380-residue protein sequence, read N- to C-terminus: Flap endonuclease 1 (380 aa).

The tract at residues methionine 1–arginine 104 is N-domain. Symmetric dimethylarginine; by PRMT5 is present on arginine 19. Residue aspartate 34 coordinates Mg(2+). 2 residues coordinate DNA: arginine 47 and arginine 70. Lysine 80 carries the post-translational modification N6-acetyllysine. Aspartate 86 contacts Mg(2+). Residues arginine 100 and arginine 104 each carry the symmetric dimethylarginine; by PRMT5 modification. The interval glutamate 122 to histidine 253 is I-domain. Positions 158, 160, 179, and 181 each coordinate Mg(2+). Glutamate 158 contacts DNA. Phosphoserine; by CDK2 is present on serine 187. A Symmetric dimethylarginine; by PRMT5 modification is found at arginine 192. Position 197 is a phosphoserine (serine 197). Positions 231 and 233 each coordinate DNA. Aspartate 233 is a binding site for Mg(2+). Phosphoserine occurs at positions 255, 293, and 335. The disordered stretch occupies residues arginine 327–lysine 380. Threonine 336 is modified (phosphothreonine). The tract at residues threonine 336–phenylalanine 344 is interaction with PCNA. The residue at position 354 (lysine 354) is an N6-acetyllysine. Residues serine 363–lysine 380 show a composition bias toward basic residues. Residue threonine 364 is modified to Phosphothreonine. N6-acetyllysine occurs at positions 375, 377, and 380.

This sequence belongs to the XPG/RAD2 endonuclease family. FEN1 subfamily. Interacts with PCNA. Three molecules of FEN1 bind to one PCNA trimer with each molecule binding to one PCNA monomer. PCNA stimulates the nuclease activity without altering cleavage specificity. The C-terminal domain binds EP300; can bind simultaneously to both PCNA and EP300. Interacts with DDX11; this interaction is direct and increases flap endonuclease activity of FEN1. Interacts with WDR4; regulating its endonuclease activity. Interacts with POLB. It depends on Mg(2+) as a cofactor. In terms of processing, acetylated by EP300. Acetylation inhibits both endonuclease and exonuclease activity. Acetylation also reduces DNA-binding activity but does not affect interaction with PCNA or EP300. Post-translationally, phosphorylation upon DNA damage induces relocalization to the nuclear plasma. Phosphorylation at Ser-187 by CDK2 occurs during late S-phase and results in dissociation from PCNA. Methylation at Arg-192 by PRMT5 impedes Ser-187 phosphorylation and increases interaction with PCNA.

The protein localises to the nucleus. It localises to the nucleolus. The protein resides in the nucleoplasm. Its subcellular location is the mitochondrion. Functionally, structure-specific nuclease with 5'-flap endonuclease and 5'-3' exonuclease activities involved in DNA replication and repair. During DNA replication, cleaves the 5'-overhanging flap structure that is generated by displacement synthesis when DNA polymerase encounters the 5'-end of a downstream Okazaki fragment. It enters the flap from the 5'-end and then tracks to cleave the flap base, leaving a nick for ligation. Also involved in the long patch base excision repair (LP-BER) pathway, by cleaving within the apurinic/apyrimidinic (AP) site-terminated flap. Acts as a genome stabilization factor that prevents flaps from equilibrating into structures that lead to duplications and deletions. Also possesses 5'-3' exonuclease activity on nicked or gapped double-stranded DNA, and exhibits RNase H activity. Also involved in replication and repair of rDNA and in repairing mitochondrial DNA. This is Flap endonuclease 1 from Macaca fascicularis (Crab-eating macaque).